Reading from the N-terminus, the 158-residue chain is NADPH-dependent 7-cyano-7-deazaguanine reductase (158 aa).

Cys-56 acts as the Thioimide intermediate in catalysis. The active-site Proton donor is Asp-63. Residues 78-80 (LES) and 97-98 (HE) each bind substrate.

Belongs to the GTP cyclohydrolase I family. QueF type 1 subfamily.

The protein resides in the cytoplasm. The catalysed reaction is 7-aminomethyl-7-carbaguanine + 2 NADP(+) = 7-cyano-7-deazaguanine + 2 NADPH + 3 H(+). It participates in tRNA modification; tRNA-queuosine biosynthesis. Functionally, catalyzes the NADPH-dependent reduction of 7-cyano-7-deazaguanine (preQ0) to 7-aminomethyl-7-deazaguanine (preQ1). The protein is NADPH-dependent 7-cyano-7-deazaguanine reductase of Nitrobacter hamburgensis (strain DSM 10229 / NCIMB 13809 / X14).